Here is a 495-residue protein sequence, read N- to C-terminus: Ferruginol synthase (495 aa).

Methionine 1 is a topological domain (lumenal). Residues 2–22 form a helical membrane-spanning segment; that stretch reads DSFPLLAALFFIAATITFLSF. The Cytoplasmic segment spans residues 23-495; sequence RRRRNLPPGP…PLRIIPIVKS (473 aa). Cysteine 437 serves as a coordination point for heme.

The protein belongs to the cytochrome P450 family. Requires heme as cofactor. In terms of tissue distribution, expression is more abundant in the rhizome.

Its subcellular location is the endoplasmic reticulum membrane. It catalyses the reaction abieta-8,11,13-triene + reduced [NADPH--hemoprotein reductase] + O2 = ferruginol + oxidized [NADPH--hemoprotein reductase] + H2O + H(+). Cytochrome P450 enzyme (CYP) which catalyzes a unique two-electron oxidation cascade on abieta-8,11,13-triene to produce ferruginol, an intermediate in tanshinone biosynthesis. This Salvia miltiorrhiza (Chinese sage) protein is Ferruginol synthase.